A 461-amino-acid polypeptide reads, in one-letter code: Bifunctional protein GlmU (461 aa).

The pyrophosphorylase stretch occupies residues 1–229; that stretch reads MLKKEINVVI…CKEILGVNNK (229 aa). UDP-N-acetyl-alpha-D-glucosamine is bound by residues 11 to 14, Lys-25, Gln-76, 81 to 82, 103 to 105, Gly-140, Glu-154, and Asn-227; these read LAAG, GT, and YGD. Residue Asp-105 coordinates Mg(2+). Asn-227 contributes to the Mg(2+) binding site. The tract at residues 230 to 250 is linker; sequence LQLSILEKIFRKKQVNDLLLS. Residues 251 to 461 are N-acetyltransferase; it reads GVTLKDPNHF…PQKIIKKTDQ (211 aa). The UDP-N-acetyl-alpha-D-glucosamine site is built by Arg-333 and Lys-351. His-363 (proton acceptor) is an active-site residue. The UDP-N-acetyl-alpha-D-glucosamine site is built by Tyr-366 and Asn-377. Acetyl-CoA is bound by residues Ala-380, 386–387, and Ala-423; that span reads NY.

In the N-terminal section; belongs to the N-acetylglucosamine-1-phosphate uridyltransferase family. The protein in the C-terminal section; belongs to the transferase hexapeptide repeat family. Homotrimer. The cofactor is Mg(2+).

It is found in the cytoplasm. It carries out the reaction alpha-D-glucosamine 1-phosphate + acetyl-CoA = N-acetyl-alpha-D-glucosamine 1-phosphate + CoA + H(+). The catalysed reaction is N-acetyl-alpha-D-glucosamine 1-phosphate + UTP + H(+) = UDP-N-acetyl-alpha-D-glucosamine + diphosphate. It participates in nucleotide-sugar biosynthesis; UDP-N-acetyl-alpha-D-glucosamine biosynthesis; N-acetyl-alpha-D-glucosamine 1-phosphate from alpha-D-glucosamine 6-phosphate (route II): step 2/2. The protein operates within nucleotide-sugar biosynthesis; UDP-N-acetyl-alpha-D-glucosamine biosynthesis; UDP-N-acetyl-alpha-D-glucosamine from N-acetyl-alpha-D-glucosamine 1-phosphate: step 1/1. It functions in the pathway bacterial outer membrane biogenesis; LPS lipid A biosynthesis. Its function is as follows. Catalyzes the last two sequential reactions in the de novo biosynthetic pathway for UDP-N-acetylglucosamine (UDP-GlcNAc). The C-terminal domain catalyzes the transfer of acetyl group from acetyl coenzyme A to glucosamine-1-phosphate (GlcN-1-P) to produce N-acetylglucosamine-1-phosphate (GlcNAc-1-P), which is converted into UDP-GlcNAc by the transfer of uridine 5-monophosphate (from uridine 5-triphosphate), a reaction catalyzed by the N-terminal domain. In Buchnera aphidicola subsp. Schizaphis graminum (strain Sg), this protein is Bifunctional protein GlmU.